The sequence spans 288 residues: Diaminopimelate epimerase (288 aa).

Positions 14 and 67 each coordinate substrate. Cys76 serves as the catalytic Proton donor. Residues 77–78 (GN), Asn166, Asn199, and 217–218 (ER) each bind substrate. Cys226 functions as the Proton acceptor in the catalytic mechanism. Substrate is bound at residue 227 to 228 (GT).

Belongs to the diaminopimelate epimerase family. Homodimer.

It is found in the cytoplasm. It catalyses the reaction (2S,6S)-2,6-diaminopimelate = meso-2,6-diaminopimelate. It functions in the pathway amino-acid biosynthesis; L-lysine biosynthesis via DAP pathway; DL-2,6-diaminopimelate from LL-2,6-diaminopimelate: step 1/1. Its function is as follows. Catalyzes the stereoinversion of LL-2,6-diaminopimelate (L,L-DAP) to meso-diaminopimelate (meso-DAP), a precursor of L-lysine and an essential component of the bacterial peptidoglycan. The polypeptide is Diaminopimelate epimerase (Bacillus cytotoxicus (strain DSM 22905 / CIP 110041 / 391-98 / NVH 391-98)).